A 156-amino-acid polypeptide reads, in one-letter code: ATP synthase subunit b (156 aa).

A helical membrane pass occupies residues 13 to 33 (AFIIFVWFCMKFVWPPLMNAI).

Belongs to the ATPase B chain family. As to quaternary structure, F-type ATPases have 2 components, F(1) - the catalytic core - and F(0) - the membrane proton channel. F(1) has five subunits: alpha(3), beta(3), gamma(1), delta(1), epsilon(1). F(0) has three main subunits: a(1), b(2) and c(10-14). The alpha and beta chains form an alternating ring which encloses part of the gamma chain. F(1) is attached to F(0) by a central stalk formed by the gamma and epsilon chains, while a peripheral stalk is formed by the delta and b chains.

It localises to the cell inner membrane. In terms of biological role, f(1)F(0) ATP synthase produces ATP from ADP in the presence of a proton or sodium gradient. F-type ATPases consist of two structural domains, F(1) containing the extramembraneous catalytic core and F(0) containing the membrane proton channel, linked together by a central stalk and a peripheral stalk. During catalysis, ATP synthesis in the catalytic domain of F(1) is coupled via a rotary mechanism of the central stalk subunits to proton translocation. Its function is as follows. Component of the F(0) channel, it forms part of the peripheral stalk, linking F(1) to F(0). In Shewanella sediminis (strain HAW-EB3), this protein is ATP synthase subunit b.